We begin with the raw amino-acid sequence, 207 residues long: Vascular endothelial growth factor B (207 aa).

An N-terminal signal peptide occupies residues 1-21; that stretch reads MSPLLRRLLLAVLLQLAPAQA. 3 cysteine pairs are disulfide-bonded: C47/C89, C78/C122, and C82/C124. Positions 124 to 139 are enriched in basic and acidic residues; that stretch reads CRPKKRESAVKPDRAS. Positions 124 to 207 are disordered; it reads CRPKKRESAV…AASSVVKGGA (84 aa). Residues 174-201 show a composition bias toward low complexity; that stretch reads PSAHAAPSAASALTPGPATAAADAAASS.

Belongs to the PDGF/VEGF growth factor family. Homodimer; disulfide-linked. Can also form heterodimer with VEGF. In terms of processing, VEGF-B186 is O-glycosylated.

It is found in the secreted. Its function is as follows. Growth factor for endothelial cells. VEGF-B167 binds heparin and neuropilin-1 whereas the binding to neuropilin-1 of VEGF-B186 is regulated by proteolysis. This is Vascular endothelial growth factor B (VEGFB) from Bos taurus (Bovine).